Consider the following 156-residue polypeptide: Small ribosomal subunit protein uS7 (156 aa).

This sequence belongs to the universal ribosomal protein uS7 family. Part of the 30S ribosomal subunit. Contacts proteins S9 and S11.

Its function is as follows. One of the primary rRNA binding proteins, it binds directly to 16S rRNA where it nucleates assembly of the head domain of the 30S subunit. Is located at the subunit interface close to the decoding center, probably blocks exit of the E-site tRNA. The protein is Small ribosomal subunit protein uS7 of Paracoccus denitrificans (strain Pd 1222).